Reading from the N-terminus, the 397-residue chain is 1-deoxy-D-xylulose 5-phosphate reductoisomerase (397 aa).

NADPH-binding residues include Thr10, Gly11, Ser12, Ile13, Gln38, and Asn123. Lys124 is a 1-deoxy-D-xylulose 5-phosphate binding site. Glu125 is a binding site for NADPH. Asp149 contacts Mn(2+). Ser150, Glu151, Ser185, and His208 together coordinate 1-deoxy-D-xylulose 5-phosphate. Glu151 contributes to the Mn(2+) binding site. Position 214 (Gly214) interacts with NADPH. 1-deoxy-D-xylulose 5-phosphate is bound by residues Ser221, Asn226, Lys227, and Glu230. Glu230 serves as a coordination point for Mn(2+).

This sequence belongs to the DXR family. Requires Mg(2+) as cofactor. The cofactor is Mn(2+).

The catalysed reaction is 2-C-methyl-D-erythritol 4-phosphate + NADP(+) = 1-deoxy-D-xylulose 5-phosphate + NADPH + H(+). Its pathway is isoprenoid biosynthesis; isopentenyl diphosphate biosynthesis via DXP pathway; isopentenyl diphosphate from 1-deoxy-D-xylulose 5-phosphate: step 1/6. Its function is as follows. Catalyzes the NADPH-dependent rearrangement and reduction of 1-deoxy-D-xylulose-5-phosphate (DXP) to 2-C-methyl-D-erythritol 4-phosphate (MEP). This is 1-deoxy-D-xylulose 5-phosphate reductoisomerase from Idiomarina loihiensis (strain ATCC BAA-735 / DSM 15497 / L2-TR).